The primary structure comprises 210 residues: GRF1-interacting factor 1 (210 aa).

Over residues 135 to 152 (ATLQHQQLHHSQLGMSSS) the composition is skewed to low complexity. The segment at 135–210 (ATLQHQQLHH…LYLKSSDDGN (76 aa)) is disordered. Residues 182–198 (GSGGGGEGRGGSSGDGG) show a composition bias toward gly residues.

Belongs to the SS18 family. As to quaternary structure, interacts with GRF1, GRF2, GRF5 and GRF9. Strongly expressed in actively growing and developing tissues, such as roots, upper stems, and shoot tips and flower buds. Also expressed in mature flowers. Not expressed in the shoot apical meristem (SAM). Highly accumulated in the proximal part of leaf primordia, in the key proliferative zone at the junction region between the leaf blade and leaf petiole.

Functionally, transcription coactivator that plays a role in the regulation of cell expansion in leaf and cotyledons tissues. Component of a network formed by miR396, the GRFs and their interacting factors (GIFs) acting in the regulation of meristem function, at least partially through the control of cell proliferation. Appears to function synergistically with GRF1 as a transcriptional coactivator. Acts together with GRF5 for the development of appropriate leaf size and shape through the promotion and/or maintenance of cell proliferation activity in leaf primordia. Plays a role in adaxial/abaxial patterning and growth in leaf morphogenesis. GIFs are involved in the positive regulation of cell proliferation of lateral organs in a functionally redundant manner. Together with GATA18/HAN, mediates cotyledon identity by preventing ectopic root formation through the repression of PLT1 expression. This chain is GRF1-interacting factor 1, found in Arabidopsis thaliana (Mouse-ear cress).